The chain runs to 116 residues: Staphylococcal complement inhibitor (116 aa).

The signal sequence occupies residues 1-31 (MKIRKSILAGTLAIVLASPLVTNLDKNEAQA). The tract at residues 62–79 (LATGSLNTYYKRTIKISG) is essential for activity.

The protein belongs to the SCIN family.

The protein resides in the secreted. Functionally, involved in countering the first line of host defense mechanisms. Efficiently inhibits opsonization, phagocytosis and killing of S.aureus by human neutrophils. Acts by binding and stabilizing human C3 convertases (C4b2a and C3bBb), leading to their inactivation. The convertases are no longer able to cleave complement C3, therefore preventing further C3b deposition on the bacterial surface and phagocytosis of the bacterium. Also prevents C5a-induced neutrophil responses. The protein is Staphylococcal complement inhibitor (scn) of Staphylococcus aureus (strain Mu50 / ATCC 700699).